A 231-amino-acid polypeptide reads, in one-letter code: 7-cyano-7-deazaguanine synthase (231 aa).

Phe-8–Leu-18 serves as a coordination point for ATP. Positions 188, 197, 200, and 203 each coordinate Zn(2+).

The protein belongs to the QueC family. The cofactor is Zn(2+).

The enzyme catalyses 7-carboxy-7-deazaguanine + NH4(+) + ATP = 7-cyano-7-deazaguanine + ADP + phosphate + H2O + H(+). It participates in purine metabolism; 7-cyano-7-deazaguanine biosynthesis. Its function is as follows. Catalyzes the ATP-dependent conversion of 7-carboxy-7-deazaguanine (CDG) to 7-cyano-7-deazaguanine (preQ(0)). This Enterobacter sp. (strain 638) protein is 7-cyano-7-deazaguanine synthase.